Reading from the N-terminus, the 114-residue chain is MSYKEGDVLVTNGEQSPGYKIVEIKGLVVGITVRSRGLGKNIIASLRSLLGGEIKEYVELAEQARLQALQRMVDNAKALGANAVVNVRFDSNELSEAMDEIIAYGTAVVVEKSS.

It belongs to the UPF0145 family.

The polypeptide is UPF0145 protein SSO1976 (Saccharolobus solfataricus (strain ATCC 35092 / DSM 1617 / JCM 11322 / P2) (Sulfolobus solfataricus)).